A 516-amino-acid polypeptide reads, in one-letter code: MTLDLDALDRALDALPNLFRGPGGVAGVVKDGQVVASRAWGYADLTRRRPMETGTRLPICSISKQFTCGVLLDTLGDTAAYDARVAEFLPQFEGPLPTLRQLCDNQSGLRDYWALTVLQGAEATQTFRREDALPLIARMKTGHFPPGTAYSYCNCNFRIVSEILESETGRALPDLYAERIFGPAGMRTAELTSDTRHPADEVVGYEGSDAVGFFPADNGIFWIGDAGISASLQDMLAYESWIDATRDDENSIYRRISVPPAYVCGTPASYGFGLSHETVAGLKVTGHGGALRGFRAQRFHAADERLSVVVIFNHEASAHAAASSLLAAALGHEAPKGAGPEGWAGQWLDPESGLLLRVGEDAEGLTLRFATGPDRLTVGEDGVPRGAGVSLAREGATLVMNRTSDNLTVRAEPLPVVAVADAGEIAGRYHARELEADLVIEARDGGAYAGFEGLLGAGPMERLHPVGPDVWIVTTRRSMDAPAPGDWTLQVRREGGAVAGLRLGCWLARRIDYARV.

S61 serves as the catalytic Nucleophile. Catalysis depends on K64, which acts as the Proton donor/acceptor. The important for specificity stretch occupies residues 476-486 (RRSMDAPAPGD). Substrate is bound at residue D480.

The protein belongs to the peptidase S12 family. Homodimer.

The catalysed reaction is Release of an N-terminal D-amino acid from a peptide, Xaa-|-Yaa-, in which Xaa is preferably D-Ala, D-Ser or D-Thr. D-amino acid amides and methyl esters also are hydrolyzed, as is glycine amide.. With respect to regulation, inhibited by beta-lactam compounds such as 6-aminopenicillic acid, 7-aminocephalosporanic acid, benzylpenicillin and ampicillin. Inhibited by p-chloromercuribenzoate. In terms of biological role, hydrolyzes N-terminal residues in D-amino acid-containing peptides. In Cereibacter sphaeroides (strain ATCC 17029 / ATH 2.4.9) (Rhodobacter sphaeroides), this protein is D-aminopeptidase.